The chain runs to 431 residues: Enolase (431 aa).

Residue Q163 participates in (2R)-2-phosphoglycerate binding. E205 functions as the Proton donor in the catalytic mechanism. Mg(2+) contacts are provided by D242, E288, and D315. Residues K340, R369, S370, and K391 each coordinate (2R)-2-phosphoglycerate. The active-site Proton acceptor is K340.

It belongs to the enolase family. Mg(2+) is required as a cofactor.

The protein localises to the cytoplasm. The protein resides in the secreted. It is found in the cell surface. The enzyme catalyses (2R)-2-phosphoglycerate = phosphoenolpyruvate + H2O. Its pathway is carbohydrate degradation; glycolysis; pyruvate from D-glyceraldehyde 3-phosphate: step 4/5. Catalyzes the reversible conversion of 2-phosphoglycerate (2-PG) into phosphoenolpyruvate (PEP). It is essential for the degradation of carbohydrates via glycolysis. This chain is Enolase, found in Bacillus mycoides (strain KBAB4) (Bacillus weihenstephanensis).